Here is a 570-residue protein sequence, read N- to C-terminus: Sulfite reductase [NADPH] hemoprotein beta-component (570 aa).

Residues C434, C440, C479, and C483 each coordinate [4Fe-4S] cluster. Residue C483 coordinates siroheme.

The protein belongs to the nitrite and sulfite reductase 4Fe-4S domain family. As to quaternary structure, alpha(8)-beta(8). The alpha component is a flavoprotein, the beta component is a hemoprotein. Requires siroheme as cofactor. It depends on [4Fe-4S] cluster as a cofactor.

The catalysed reaction is hydrogen sulfide + 3 NADP(+) + 3 H2O = sulfite + 3 NADPH + 4 H(+). Its pathway is sulfur metabolism; hydrogen sulfide biosynthesis; hydrogen sulfide from sulfite (NADPH route): step 1/1. Its function is as follows. Component of the sulfite reductase complex that catalyzes the 6-electron reduction of sulfite to sulfide. This is one of several activities required for the biosynthesis of L-cysteine from sulfate. The chain is Sulfite reductase [NADPH] hemoprotein beta-component from Klebsiella pneumoniae subsp. pneumoniae (strain ATCC 700721 / MGH 78578).